A 311-amino-acid chain; its full sequence is Ribose-phosphate pyrophosphokinase (311 aa).

ATP-binding positions include 34 to 36 and 93 to 94; these read DQE and RQ. Mg(2+)-binding residues include His-127 and Asp-168. Residue Lys-191 is part of the active site. D-ribose 5-phosphate is bound by residues Arg-193, Asp-217, and 221–225; that span reads DSGGT.

This sequence belongs to the ribose-phosphate pyrophosphokinase family. Class I subfamily. In terms of assembly, homohexamer. It depends on Mg(2+) as a cofactor.

The protein localises to the cytoplasm. It catalyses the reaction D-ribose 5-phosphate + ATP = 5-phospho-alpha-D-ribose 1-diphosphate + AMP + H(+). It functions in the pathway metabolic intermediate biosynthesis; 5-phospho-alpha-D-ribose 1-diphosphate biosynthesis; 5-phospho-alpha-D-ribose 1-diphosphate from D-ribose 5-phosphate (route I): step 1/1. Its function is as follows. Involved in the biosynthesis of the central metabolite phospho-alpha-D-ribosyl-1-pyrophosphate (PRPP) via the transfer of pyrophosphoryl group from ATP to 1-hydroxyl of ribose-5-phosphate (Rib-5-P). This is Ribose-phosphate pyrophosphokinase from Mesorhizobium japonicum (strain LMG 29417 / CECT 9101 / MAFF 303099) (Mesorhizobium loti (strain MAFF 303099)).